The primary structure comprises 23 residues: Cardioactive peptide CAP23 (23 aa).

A disulfide bridge links Cys7 with Cys19.

It belongs to the GBP/PSP1/paralytic peptide family.

Has excitatory effects on a semi-isolated heart from larval Manduca sexta, causing an inotropic effect at low concentrations of peptide and chronotropic and inotropic effects at high doses. The sequence is that of Cardioactive peptide CAP23 from Spodoptera eridania (Southern armyworm).